The following is a 273-amino-acid chain: Thiazole synthase (273 aa).

Lysine 113 serves as the catalytic Schiff-base intermediate with DXP. 1-deoxy-D-xylulose 5-phosphate-binding positions include glycine 174, 201–202 (AG), and 223–224 (NT).

It belongs to the ThiG family. In terms of assembly, homotetramer. Forms heterodimers with either ThiH or ThiS.

It localises to the cytoplasm. The enzyme catalyses [ThiS sulfur-carrier protein]-C-terminal-Gly-aminoethanethioate + 2-iminoacetate + 1-deoxy-D-xylulose 5-phosphate = [ThiS sulfur-carrier protein]-C-terminal Gly-Gly + 2-[(2R,5Z)-2-carboxy-4-methylthiazol-5(2H)-ylidene]ethyl phosphate + 2 H2O + H(+). It functions in the pathway cofactor biosynthesis; thiamine diphosphate biosynthesis. Catalyzes the rearrangement of 1-deoxy-D-xylulose 5-phosphate (DXP) to produce the thiazole phosphate moiety of thiamine. Sulfur is provided by the thiocarboxylate moiety of the carrier protein ThiS. In vitro, sulfur can be provided by H(2)S. The protein is Thiazole synthase of Salinibacter ruber (strain DSM 13855 / M31).